The chain runs to 181 residues: ADP-ribosylation factor 1 (181 aa).

Gly-2 is lipidated: N-myristoyl glycine. GTP is bound by residues 24-31, 67-71, and 126-129; these read GLDAAGKT, DVGGQ, and NKQD.

This sequence belongs to the small GTPase superfamily. Arf family.

The protein resides in the golgi apparatus. It catalyses the reaction GTP + H2O = GDP + phosphate + H(+). In terms of biological role, GTP-binding protein involved in protein trafficking; may modulate vesicle budding and uncoating within the Golgi apparatus. The sequence is that of ADP-ribosylation factor 1 (ARF1) from Daucus carota (Wild carrot).